A 307-amino-acid polypeptide reads, in one-letter code: Thioredoxin-related transmembrane protein 2-B (307 aa).

Residues 1–19 form the signal peptide; sequence MALLTPLFAFLYHLPQVYK. The Extracellular portion of the chain corresponds to 20-111; sequence WLLKPYYIAS…VILFFRLDIR (92 aa). A helical transmembrane segment spans residues 112–132; sequence LGLLYLTLCIVFLMTCKPPLY. The region spanning 132 to 269 is the Thioredoxin domain; the sequence is YMGPEYIKYF…LYQKSKKLGK (138 aa). The Cytoplasmic portion of the chain corresponds to 133–307; that stretch reads MGPEYIKYFS…AMDTESKKDK (175 aa). The interval 268 to 307 is disordered; that stretch reads GKTKEKLERPSELVFSTVPEEEEPEAETISAMDTESKKDK. Over residues 269–278 the composition is skewed to basic and acidic residues; it reads KTKEKLERPS. The Di-lysine motif signature appears at 304–307; sequence KKDK.

In terms of assembly, monomer. Homodimer; disulfide-linked. Occurs in both reduced and oxidized monomeric form. Oxidative conditions increase homodimerization.

The protein resides in the endoplasmic reticulum membrane. Its subcellular location is the mitochondrion membrane. In terms of biological role, endoplasmic reticulum and mitochondria-associated protein that probably functions as a regulator of cellular redox state and thereby regulates protein post-translational modification, protein folding and mitochondrial activity. The protein is Thioredoxin-related transmembrane protein 2-B (tmx2b) of Danio rerio (Zebrafish).